The primary structure comprises 211 residues: MIERTFVGENVSETLIDEYFKTKLVRAGYSHIDLKKTPIGTRITVFAEKPGFVIGRKGKMVKELTETLAKEYAVKNPQIEVKQVENPDLDPAIVGHKIASSLERGMHFRRTAHSAIRRVMGSGAKGVSIIVSGKLSGERSRTEKFMDGYMKHCGEPAEALVNKSHQLAKLKLGVVGVTVKIMKPDVTLPDEITILSGEIKEVTEYSEASQE.

In terms of domain architecture, KH type-2 spans 16–85 (IDEYFKTKLV…NPQIEVKQVE (70 aa)).

The protein belongs to the universal ribosomal protein uS3 family. As to quaternary structure, part of the 30S ribosomal subunit.

Binds the lower part of the 30S subunit head. This Methanococcus maripaludis (strain C5 / ATCC BAA-1333) protein is Small ribosomal subunit protein uS3.